A 718-amino-acid polypeptide reads, in one-letter code: MRQTGLASLPLKSLAVAVLLSLAGTPALAADIPANVDGARIIAADKEPGNWMSTGRTYDEQRYSPLKQISDQNVGQLGLAWSYKLDLDRGVEATPIVVDGAMYTTGPFSVVYALDARDGRLIWKYDPQSDRHRAGEACCDAVNRGVAVWKGKVYVGVLDGRLEAIDAKTGQRAWSVDTRADHKRSYTITGAPRVVNGKVVIGNGGAEFGVRGYVTAYDAETGKEAWRFYTVPGDPKLPPEGKGMEIAAKTWFGDAYVEQGGGGTAWDSFAYDPELNLLYIGVGNGSLWDPKWRSQAKGDNLFLSSIVAVNADTGEYVWHYQTTPGDAWDYTATQHMILAELPIDGKPRKVLMQAPKNGFFYVIDRATGELLSAKGIVPQSWTKGMDMKTGRPILDEENAAYWKNGKRNLVTPAFWGAHDWQPMSYNPDTGLVYIPAHIMSAYYEHIPEAPKRNPFKSMYQLGLRTGMMPEGAEGLLEMAKSWSGKLIAWDPVKQQAAWEVPYVTIFNGGTLSTAGNLVFEGSADGRVIAYAADTGEKLWEQPAASGVMAAPVTYSVDGEQYVTFMAGWGGAFSTFAGALSLRAGVQPYAQVLTYKLGGTAKLQEPAPRPDTPKPPALSNDTASIEAGAKLYDGYCSQCHGIHAVSGGVLPDLRKLTPEKHQMFLGILFGGRVPDGMPSFADAFTPEQVDQIHQYLIKRAHDLHQEGDTWKQFSAKSSH.

The signal sequence occupies residues 1–29; it reads MRQTGLASLPLKSLAVAVLLSLAGTPALA. A pyrroloquinoline quinone-binding site is contributed by Glu-92. A disulfide bridge links Cys-138 with Cys-139. Pyrroloquinoline quinone is bound by residues Arg-144, Thr-189, and 205–206; that span reads GA. Residue Glu-207 participates in Ca(2+) binding. Thr-264 lines the pyrroloquinoline quinone pocket. Asn-284 and Asp-329 together coordinate Ca(2+). Catalysis depends on Asp-329, which acts as the Proton acceptor. Position 356 (Lys-356) interacts with pyrroloquinoline quinone. A substrate-binding site is contributed by Trp-415. Pyrroloquinoline quinone is bound by residues 419–420 and Ala-571; that span reads DW. Residues 622-699 form the Cytochrome c domain; it reads ASIEAGAKLY…QIHQYLIKRA (78 aa). The heme c site is built by Cys-635, Cys-638, His-639, and Met-676.

It belongs to the bacterial PQQ dehydrogenase family. In terms of assembly, monomer. It depends on pyrroloquinoline quinone as a cofactor. The cofactor is Ca(2+). Heme c is required as a cofactor.

It is found in the periplasm. The enzyme catalyses 2 oxidized [azurin] + a primary alcohol = 2 reduced [azurin] + an aldehyde + 2 H(+). Exhibits higher affinity for 1-butanol compared to 1,2-propanediol but inhibited by 10 mM 1-butanol. Functionally, catalyzes the dye-linked oxidation of primary alcohols to the corresponding aldehydes and the (subsequent) oxidation of the aldehydes to carboxylic acids. Active with primary alcohols, glycerol, 1,2-propanediol, 1,3-propanediol but not with methanol or sugar alcohols such as D-sorbitol. This Pseudomonas putida (Arthrobacter siderocapsulatus) protein is Quinohemoprotein alcohol dehydrogenase ADH-IIG.